The primary structure comprises 173 residues: NADH-quinone oxidoreductase subunit B 2 (173 aa).

[4Fe-4S] cluster contacts are provided by C42, C43, C107, and C137.

This sequence belongs to the complex I 20 kDa subunit family. In terms of assembly, NDH-1 is composed of 14 different subunits. Subunits NuoB, C, D, E, F, and G constitute the peripheral sector of the complex. It depends on [4Fe-4S] cluster as a cofactor.

It localises to the cell inner membrane. It catalyses the reaction a quinone + NADH + 5 H(+)(in) = a quinol + NAD(+) + 4 H(+)(out). In terms of biological role, NDH-1 shuttles electrons from NADH, via FMN and iron-sulfur (Fe-S) centers, to quinones in the respiratory chain. Couples the redox reaction to proton translocation (for every two electrons transferred, four hydrogen ions are translocated across the cytoplasmic membrane), and thus conserves the redox energy in a proton gradient. This chain is NADH-quinone oxidoreductase subunit B 2, found in Anaeromyxobacter dehalogenans (strain 2CP-C).